The sequence spans 187 residues: Peptidyl-tRNA hydrolase (187 aa).

Residue Tyr15 participates in tRNA binding. His20 serves as the catalytic Proton acceptor. Positions 65, 67, and 113 each coordinate tRNA.

It belongs to the PTH family. Monomer.

It is found in the cytoplasm. The enzyme catalyses an N-acyl-L-alpha-aminoacyl-tRNA + H2O = an N-acyl-L-amino acid + a tRNA + H(+). Hydrolyzes ribosome-free peptidyl-tRNAs (with 1 or more amino acids incorporated), which drop off the ribosome during protein synthesis, or as a result of ribosome stalling. Functionally, catalyzes the release of premature peptidyl moieties from peptidyl-tRNA molecules trapped in stalled 50S ribosomal subunits, and thus maintains levels of free tRNAs and 50S ribosomes. The chain is Peptidyl-tRNA hydrolase from Elusimicrobium minutum (strain Pei191).